Reading from the N-terminus, the 106-residue chain is Large ribosomal subunit protein uL24 (106 aa).

The protein belongs to the universal ribosomal protein uL24 family. In terms of assembly, part of the 50S ribosomal subunit.

Functionally, one of two assembly initiator proteins, it binds directly to the 5'-end of the 23S rRNA, where it nucleates assembly of the 50S subunit. Its function is as follows. One of the proteins that surrounds the polypeptide exit tunnel on the outside of the subunit. This chain is Large ribosomal subunit protein uL24, found in Blochmanniella floridana.